A 349-amino-acid chain; its full sequence is UDP-3-O-acylglucosamine N-acyltransferase (349 aa).

The active-site Proton acceptor is histidine 246.

Belongs to the transferase hexapeptide repeat family. LpxD subfamily. Homotrimer.

The enzyme catalyses a UDP-3-O-[(3R)-3-hydroxyacyl]-alpha-D-glucosamine + a (3R)-hydroxyacyl-[ACP] = a UDP-2-N,3-O-bis[(3R)-3-hydroxyacyl]-alpha-D-glucosamine + holo-[ACP] + H(+). The protein operates within bacterial outer membrane biogenesis; LPS lipid A biosynthesis. In terms of biological role, catalyzes the N-acylation of UDP-3-O-acylglucosamine using 3-hydroxyacyl-ACP as the acyl donor. Is involved in the biosynthesis of lipid A, a phosphorylated glycolipid that anchors the lipopolysaccharide to the outer membrane of the cell. The protein is UDP-3-O-acylglucosamine N-acyltransferase of Trichormus variabilis (strain ATCC 29413 / PCC 7937) (Anabaena variabilis).